Reading from the N-terminus, the 281-residue chain is Sulfur carrier protein FdhD (281 aa).

Residue cysteine 127 is the Cysteine persulfide intermediate of the active site. Position 264–269 (264–269 (FAREGR)) interacts with Mo-bis(molybdopterin guanine dinucleotide).

It belongs to the FdhD family.

It localises to the cytoplasm. Required for formate dehydrogenase (FDH) activity. Acts as a sulfur carrier protein that transfers sulfur from IscS to the molybdenum cofactor prior to its insertion into FDH. This Mannheimia succiniciproducens (strain KCTC 0769BP / MBEL55E) protein is Sulfur carrier protein FdhD.